Reading from the N-terminus, the 384-residue chain is Cyclin-J (384 aa).

Positions 15-143 constitute a Cyclin N-terminal domain; that stretch reads DIHQTLRYKE…LLETFEWNLC (129 aa).

It belongs to the cyclin family. Cyclin J subfamily.

This Xenopus laevis (African clawed frog) protein is Cyclin-J (ccnj).